We begin with the raw amino-acid sequence, 218 residues long: Large ribosomal subunit protein uL3 (218 aa).

2 disordered regions span residues 128–167 (FSRG…RMGG) and 199–218 (SLLN…QGGK).

The protein belongs to the universal ribosomal protein uL3 family. As to quaternary structure, part of the 50S ribosomal subunit. Forms a cluster with proteins L14 and L19.

Functionally, one of the primary rRNA binding proteins, it binds directly near the 3'-end of the 23S rRNA, where it nucleates assembly of the 50S subunit. This is Large ribosomal subunit protein uL3 from Prochlorococcus marinus (strain NATL2A).